The chain runs to 239 residues: Leucine-rich repeat-containing protein 57 (239 aa).

The N-myristoyl glycine moiety is linked to residue Gly2. 8 LRR repeats span residues 39–60 (NLRTIDLSNNKIESLPPLLIGK), 63–84 (LLKSLSLNNNKLTVLPDEICNL), 86–107 (KLETLSLNNNHLRELPSTFGQL), 109–131 (ALKTLSLSGNQLGALPPQLCSLR), 132–153 (HLDVMDLSKNQIRSIPDSVGEL), 154–175 (QVIELNLNQNQISQISVKISCC), 177–197 (RLKILRLEENCLELSMLPQSI), and 202–222 (QICLLAVEGNLFEIKKLRELE).

Its subcellular location is the membrane. This Homo sapiens (Human) protein is Leucine-rich repeat-containing protein 57 (LRRC57).